The primary structure comprises 2231 residues: Helicase SEN1 (2231 aa).

Over residues 1 to 17 (MNSNNPDNNNSNNINNN) the composition is skewed to low complexity. Disordered stretches follow at residues 1-24 (MNSNNPDNNNSNNINNNNKDKDIA) and 1032-1061 (HPPSAPAFHTKSRGLSNKNDDSSSEESDND). Residues glutamine 1339 and 1360–1364 (GTGKT) contribute to the ATP site. Residues 1491-1511 (ELRGKLDSESGNPESPMSTED) are disordered. The segment covering 1499 to 1510 (ESGNPESPMSTE) has biased composition (polar residues). ATP is bound by residues glutamine 1619, tyrosine 1655, and glutamate 1787. 2 disordered regions span residues 1894-1993 (ITQG…AVVG) and 2032-2231 (QLGL…KPRS). The Nuclear localization signal motif lies at 1909-1927 (KRRVVDEGEEADKAVKKKK). Residues 1923–1937 (VKKKKKEKKKEKKKS) are compositionally biased toward basic residues. Residues 1938-1950 (KADDKKKNNKKAE) are compositionally biased toward basic and acidic residues. Positions 2048–2058 (NNEDDDDEDDY) are enriched in acidic residues. 2 stretches are compositionally biased toward polar residues: residues 2060 to 2088 (PSISDSSLMKSEANGRNNRVASHNQNFSA) and 2095 to 2104 (QVSQAKQTQV). Residues 2114-2123 (SNSVLSGGSS) show a composition bias toward low complexity. Residues 2134–2160 (PNQNGQNGANRTLSQHVGNANQYSTAP) are compositionally biased toward polar residues. Residues 2210 to 2220 (RNSSRRNASSS) show a composition bias toward low complexity.

Belongs to the DNA2/NAM7 helicase family. In terms of assembly, interacts with RAD2, RNT1 and RPB1. Binds to multiple snoRNAs.

It is found in the nucleus. Functionally, ATP-dependent 5'-&gt;3' DNA/RNA helicase required for the expression and maturation of diverse classes of non-protein-coding RNAs like precursor tRNAs, rRNAs and small nuclear (snRNA) and nucleolar (snoRNA) RNAs. Directs RNA polymerase II transcription termination on snoRNAs as well as on several short protein-coding genes. May also play a role in transcription-coupled nucleotide excision repair. The protein is Helicase SEN1 (SEN1) of Saccharomyces cerevisiae (strain ATCC 204508 / S288c) (Baker's yeast).